We begin with the raw amino-acid sequence, 154 residues long: Superoxide dismutase [Cu-Zn] (154 aa).

Cu cation contacts are provided by histidine 47, histidine 49, and histidine 64. Residues cysteine 58 and cysteine 147 are joined by a disulfide bond. Zn(2+) contacts are provided by histidine 64, histidine 72, histidine 81, and aspartate 84. Cu cation is bound at residue histidine 121. Over residues 125 to 137 (DDLGRGGNEESKK) the composition is skewed to basic and acidic residues. The disordered stretch occupies residues 125–147 (DDLGRGGNEESKKTGNAGPRPAC). Arginine 144 is a binding site for substrate.

In terms of assembly, homodimer. It depends on Cu cation as a cofactor. Zn(2+) serves as cofactor.

The protein localises to the cytoplasm. The enzyme catalyses 2 superoxide + 2 H(+) = H2O2 + O2. Destroys radicals which are normally produced within the cells and which are toxic to biological systems. The chain is Superoxide dismutase [Cu-Zn] from Aspergillus niger.